Consider the following 702-residue polypeptide: Elongation factor G 2 (702 aa).

A tr-type G domain is found at 8–285 (DMVRNIGISA…AVTYYLPSPA (278 aa)). Residues 17–24 (AHIDSGKT), 84–88 (DTPGH), and 138–141 (NKLD) contribute to the GTP site.

It belongs to the TRAFAC class translation factor GTPase superfamily. Classic translation factor GTPase family. EF-G/EF-2 subfamily.

Its subcellular location is the cytoplasm. In terms of biological role, catalyzes the GTP-dependent ribosomal translocation step during translation elongation. During this step, the ribosome changes from the pre-translocational (PRE) to the post-translocational (POST) state as the newly formed A-site-bound peptidyl-tRNA and P-site-bound deacylated tRNA move to the P and E sites, respectively. Catalyzes the coordinated movement of the two tRNA molecules, the mRNA and conformational changes in the ribosome. The polypeptide is Elongation factor G 2 (Bdellovibrio bacteriovorus (strain ATCC 15356 / DSM 50701 / NCIMB 9529 / HD100)).